The primary structure comprises 234 residues: Leucyl/phenylalanyl-tRNA--protein transferase (234 aa).

Belongs to the L/F-transferase family.

It is found in the cytoplasm. It carries out the reaction N-terminal L-lysyl-[protein] + L-leucyl-tRNA(Leu) = N-terminal L-leucyl-L-lysyl-[protein] + tRNA(Leu) + H(+). The catalysed reaction is N-terminal L-arginyl-[protein] + L-leucyl-tRNA(Leu) = N-terminal L-leucyl-L-arginyl-[protein] + tRNA(Leu) + H(+). It catalyses the reaction L-phenylalanyl-tRNA(Phe) + an N-terminal L-alpha-aminoacyl-[protein] = an N-terminal L-phenylalanyl-L-alpha-aminoacyl-[protein] + tRNA(Phe). Its function is as follows. Functions in the N-end rule pathway of protein degradation where it conjugates Leu, Phe and, less efficiently, Met from aminoacyl-tRNAs to the N-termini of proteins containing an N-terminal arginine or lysine. In Escherichia coli O157:H7 (strain EC4115 / EHEC), this protein is Leucyl/phenylalanyl-tRNA--protein transferase.